A 464-amino-acid chain; its full sequence is ATP-dependent protease ATPase subunit HslU (464 aa).

Residues I19, 61 to 66 (GVGKTE), D277, E342, and R414 each bind ATP.

This sequence belongs to the ClpX chaperone family. HslU subfamily. A double ring-shaped homohexamer of HslV is capped on each side by a ring-shaped HslU homohexamer. The assembly of the HslU/HslV complex is dependent on binding of ATP.

Its subcellular location is the cytoplasm. Functionally, ATPase subunit of a proteasome-like degradation complex; this subunit has chaperone activity. The binding of ATP and its subsequent hydrolysis by HslU are essential for unfolding of protein substrates subsequently hydrolyzed by HslV. HslU recognizes the N-terminal part of its protein substrates and unfolds these before they are guided to HslV for hydrolysis. The polypeptide is ATP-dependent protease ATPase subunit HslU (Lactobacillus johnsonii (strain CNCM I-12250 / La1 / NCC 533)).